Reading from the N-terminus, the 524-residue chain is Maturase K (524 aa).

It belongs to the intron maturase 2 family. MatK subfamily.

Its subcellular location is the plastid. The protein localises to the chloroplast. Usually encoded in the trnK tRNA gene intron. Probably assists in splicing its own and other chloroplast group II introns. This Welwitschia mirabilis (Tree tumbo) protein is Maturase K.